The chain runs to 391 residues: PPE family protein PPE18 (391 aa).

It belongs to the mycobacterial PPE family. Interacts with human TLR2.

Its subcellular location is the secreted. It is found in the cell wall. The protein resides in the cell surface. Its function is as follows. Could be a crucial virulence factor for intracellular survival of M.tuberculosis. Favors development of Th2-type response, and down-regulates the pro-inflammatory and Th1-type response. Specifically interacts with the human Toll-like receptor 2 (TLR2), leading to an early and sustained activation of p38 MAPK, which induces IL-10 production and activates Th2-type immune response. Also inhibits pro-inflammatory cytokines IL-12p40 and TNF-alpha production. Acts by up-regulating the expression as well as tyrosine phosphorylation of suppressor of cytokine signaling 3 (SOCS-3), leading to the inhibition of phosphorylation of I-kappa-B-alpha, thereby preventing nuclear translocation of the NF-kappa-B/REL subunits and expression of NF-kappa-B regulated genes like IL-12 and TNF-alpha. Induction of SOCS-3 probably depends on the activation of p38 MAPK. This chain is PPE family protein PPE18, found in Mycobacterium tuberculosis (strain ATCC 25618 / H37Rv).